Reading from the N-terminus, the 178-residue chain is Interleukin-10 (178 aa).

The N-terminal stretch at M1–A18 is a signal peptide. Intrachain disulfides connect C30–C126 and C80–C132. N67 carries N-linked (GlcNAc...) asparagine glycosylation. N134 is a glycosylation site (N-linked (GlcNAc...) asparagine).

This sequence belongs to the IL-10 family. Homodimer. Interacts with IL10RA and IL10RB.

It localises to the secreted. In terms of biological role, major immune regulatory cytokine that acts on many cells of the immune system where it has profound anti-inflammatory functions, limiting excessive tissue disruption caused by inflammation. Mechanistically, IL10 binds to its heterotetrameric receptor comprising IL10RA and IL10RB leading to JAK1 and STAT2-mediated phosphorylation of STAT3. In turn, STAT3 translocates to the nucleus where it drives expression of anti-inflammatory mediators. Targets antigen-presenting cells (APCs) such as macrophages and monocytes and inhibits their release of pro-inflammatory cytokines including granulocyte-macrophage colony-stimulating factor /GM-CSF, granulocyte colony-stimulating factor/G-CSF, IL-1 alpha, IL-1 beta, IL-6, IL-8 and TNF-alpha. Also interferes with antigen presentation by reducing the expression of MHC-class II and co-stimulatory molecules, thereby inhibiting their ability to induce T cell activation. In addition, controls the inflammatory response of macrophages by reprogramming essential metabolic pathways including mTOR signaling. This is Interleukin-10 (IL10) from Equus caballus (Horse).